A 272-amino-acid chain; its full sequence is Phosphatidylglycerol--prolipoprotein diacylglyceryl transferase (272 aa).

Transmembrane regions (helical) follow at residues 17 to 37, 55 to 75, 90 to 110, 125 to 145, 174 to 194, 202 to 222, and 230 to 250; these read LQVHWYGLMYLLAFLCAWGLA, LVFYGALGVVLGGRIGYVLFY, VWTGGMSFHGGFLGVMIAMLF, FVAPCVPTGLMFGRIGNFIGG, PSQIYQALCEGLLLFIILWWF, MAVSALFLMGYGVARFVMEFF, and GFILFGWMTKGQILTVPMLLI. Residue R138 coordinates a 1,2-diacyl-sn-glycero-3-phospho-(1'-sn-glycerol).

It belongs to the Lgt family.

Its subcellular location is the cell inner membrane. It carries out the reaction L-cysteinyl-[prolipoprotein] + a 1,2-diacyl-sn-glycero-3-phospho-(1'-sn-glycerol) = an S-1,2-diacyl-sn-glyceryl-L-cysteinyl-[prolipoprotein] + sn-glycerol 1-phosphate + H(+). The protein operates within protein modification; lipoprotein biosynthesis (diacylglyceryl transfer). Its function is as follows. Catalyzes the transfer of the diacylglyceryl group from phosphatidylglycerol to the sulfhydryl group of the N-terminal cysteine of a prolipoprotein, the first step in the formation of mature lipoproteins. The protein is Phosphatidylglycerol--prolipoprotein diacylglyceryl transferase of Acinetobacter baumannii (strain AB307-0294).